The chain runs to 229 residues: Large ribosomal subunit protein uL1 (229 aa).

The protein belongs to the universal ribosomal protein uL1 family. As to quaternary structure, part of the 50S ribosomal subunit.

In terms of biological role, binds directly to 23S rRNA. The L1 stalk is quite mobile in the ribosome, and is involved in E site tRNA release. Protein L1 is also a translational repressor protein, it controls the translation of the L11 operon by binding to its mRNA. This Histophilus somni (strain 129Pt) (Haemophilus somnus) protein is Large ribosomal subunit protein uL1.